The primary structure comprises 343 residues: Heat-inducible transcription repressor HrcA (343 aa).

Belongs to the HrcA family.

Negative regulator of class I heat shock genes (grpE-dnaK-dnaJ and groELS operons). Prevents heat-shock induction of these operons. This is Heat-inducible transcription repressor HrcA from Mycobacterium leprae (strain Br4923).